A 380-amino-acid chain; its full sequence is Chorismate synthase (380 aa).

NADP(+) is bound by residues Arg48 and Arg53. FMN is bound by residues 126–128 (RAS), Gly284, 299–303 (KPTSS), and Arg326.

It belongs to the chorismate synthase family. It depends on FMNH2 as a cofactor.

It carries out the reaction 5-O-(1-carboxyvinyl)-3-phosphoshikimate = chorismate + phosphate. It functions in the pathway metabolic intermediate biosynthesis; chorismate biosynthesis; chorismate from D-erythrose 4-phosphate and phosphoenolpyruvate: step 7/7. Functionally, catalyzes the anti-1,4-elimination of the C-3 phosphate and the C-6 proR hydrogen from 5-enolpyruvylshikimate-3-phosphate (EPSP) to yield chorismate, which is the branch point compound that serves as the starting substrate for the three terminal pathways of aromatic amino acid biosynthesis. This reaction introduces a second double bond into the aromatic ring system. The protein is Chorismate synthase of Ignicoccus hospitalis (strain KIN4/I / DSM 18386 / JCM 14125).